The sequence spans 518 residues: Xylose import ATP-binding protein XylG (518 aa).

2 consecutive ABC transporter domains span residues 6–245 (LQMN…VGRE) and 262–507 (FEAR…LSHS). 38 to 45 (GENGAGKS) is a binding site for ATP.

The protein belongs to the ABC transporter superfamily. Xylose importer (TC 3.A.1.2.4) family. As to quaternary structure, the complex is composed of two ATP-binding proteins (XylG), two transmembrane proteins (XylH) and a solute-binding protein (XylF).

The protein localises to the cell inner membrane. It carries out the reaction D-xylose(out) + ATP + H2O = D-xylose(in) + ADP + phosphate + H(+). Part of the ABC transporter complex XylFGH involved in xylose import. Responsible for energy coupling to the transport system. This chain is Xylose import ATP-binding protein XylG, found in Pseudomonas syringae pv. syringae (strain B728a).